Here is a 302-residue protein sequence, read N- to C-terminus: 33 kDa chaperonin (302 aa).

2 cysteine pairs are disulfide-bonded: cysteine 240–cysteine 242 and cysteine 273–cysteine 276.

Belongs to the HSP33 family. In terms of processing, under oxidizing conditions two disulfide bonds are formed involving the reactive cysteines. Under reducing conditions zinc is bound to the reactive cysteines and the protein is inactive.

It localises to the cytoplasm. Its function is as follows. Redox regulated molecular chaperone. Protects both thermally unfolding and oxidatively damaged proteins from irreversible aggregation. Plays an important role in the bacterial defense system toward oxidative stress. This Synechocystis sp. (strain ATCC 27184 / PCC 6803 / Kazusa) protein is 33 kDa chaperonin.